A 717-amino-acid chain; its full sequence is DNA ligase (717 aa).

NAD(+) contacts are provided by residues 44–48, 93–94, and E127; these read DADYD and SL. Catalysis depends on K129, which acts as the N6-AMP-lysine intermediate. NAD(+)-binding residues include R150, E186, K302, and K326. The Zn(2+) site is built by C431, C434, C455, and C461. Residues 639–717 form the BRCT domain; sequence ATDSPVAGKT…EDEWLALIGG (79 aa).

It belongs to the NAD-dependent DNA ligase family. LigA subfamily. It depends on Mg(2+) as a cofactor. Requires Mn(2+) as cofactor.

It catalyses the reaction NAD(+) + (deoxyribonucleotide)n-3'-hydroxyl + 5'-phospho-(deoxyribonucleotide)m = (deoxyribonucleotide)n+m + AMP + beta-nicotinamide D-nucleotide.. Functionally, DNA ligase that catalyzes the formation of phosphodiester linkages between 5'-phosphoryl and 3'-hydroxyl groups in double-stranded DNA using NAD as a coenzyme and as the energy source for the reaction. It is essential for DNA replication and repair of damaged DNA. This is DNA ligase from Rhizobium meliloti (strain 1021) (Ensifer meliloti).